We begin with the raw amino-acid sequence, 342 residues long: Dof zinc finger protein DOF4.6 (342 aa).

Residues 21 to 54 are disordered; the sequence is NTCPKPQPQPLQPQQPPSVGGERKARPEKDQAVN. Residues 25–36 show a composition bias toward pro residues; it reads KPQPQPLQPQQP. Over residues 41–51 the composition is skewed to basic and acidic residues; that stretch reads GERKARPEKDQ. The Dof-type zinc-finger motif lies at 53–107; it reads VNCPRCNSTNTKFCYYNNYSLTQPRYFCKGCRRYWTEGGSLRNIPVGGGSRKNKR. Zn(2+)-binding residues include Cys-55, Cys-58, Cys-80, and Cys-83. Residues 94–136 form a disordered region; it reads RNIPVGGGSRKNKRSHSSSSDISNNHSDSTQPATKKHLSDHHH. Residues 110 to 122 are compositionally biased toward low complexity; the sequence is SSSSDISNNHSDS. Positions 127-136 are enriched in basic residues; the sequence is TKKHLSDHHH.

In terms of tissue distribution, accumulates in the stele.

It is found in the nucleus. In terms of biological role, transcription factor that binds specifically to a 5'-AA[AG]G-3' consensus core sequence. The protein is Dof zinc finger protein DOF4.6 of Arabidopsis thaliana (Mouse-ear cress).